Reading from the N-terminus, the 812-residue chain is 5-methyltetrahydropteroyltriglutamate--homocysteine methyltransferase 3, chloroplastic (812 aa).

Residues 1-33 (MGQLALQRLQPLASLPRRPPSLPPPSSATPSLP) constitute a chloroplast transit peptide. The disordered stretch occupies residues 13-33 (ASLPRRPPSLPPPSSATPSLP). Positions 17 to 27 (RRPPSLPPPSS) are enriched in pro residues. The 5-methyltetrahydropteroyltri-L-glutamate site is built by lysine 66 and asparagine 164. The interval 430–456 (MRQASRRSSPRVTNAAVQQDVDAVKKS) is disordered. Residues 485-487 (IGS) and glutamate 538 each bind L-homocysteine. L-methionine contacts are provided by residues 485–487 (IGS) and glutamate 538. 5-methyltetrahydropteroyltri-L-glutamate is bound by residues aspartate 543, tyrosine 566, 569–570 (RC), and tryptophan 615. An L-homocysteine-binding site is contributed by aspartate 653. Residue aspartate 653 participates in L-methionine binding. Positions 695, 697, 706, 710, and 719 each coordinate Zn(2+). Histidine 749 (proton donor) is an active-site residue. Cysteine 781 serves as a coordination point for Zn(2+).

The protein belongs to the vitamin-B12 independent methionine synthase family. Zn(2+) is required as a cofactor. As to expression, expressed in seeds.

It is found in the plastid. The protein localises to the chloroplast. It catalyses the reaction 5-methyltetrahydropteroyltri-L-glutamate + L-homocysteine = tetrahydropteroyltri-L-glutamate + L-methionine. The protein operates within amino-acid biosynthesis; L-methionine biosynthesis via de novo pathway; L-methionine from L-homocysteine (MetE route): step 1/1. Functionally, catalyzes the transfer of a methyl group from 5-methyltetrahydrofolate to homocysteine resulting in methionine formation. In Arabidopsis thaliana (Mouse-ear cress), this protein is 5-methyltetrahydropteroyltriglutamate--homocysteine methyltransferase 3, chloroplastic (MS3).